The primary structure comprises 196 residues: ATP-dependent Clp protease proteolytic subunit (196 aa).

Residue Ser-98 is the Nucleophile of the active site. The active site involves His-123.

This sequence belongs to the peptidase S14 family. As to quaternary structure, fourteen ClpP subunits assemble into 2 heptameric rings which stack back to back to give a disk-like structure with a central cavity, resembling the structure of eukaryotic proteasomes.

Its subcellular location is the cytoplasm. It carries out the reaction Hydrolysis of proteins to small peptides in the presence of ATP and magnesium. alpha-casein is the usual test substrate. In the absence of ATP, only oligopeptides shorter than five residues are hydrolyzed (such as succinyl-Leu-Tyr-|-NHMec, and Leu-Tyr-Leu-|-Tyr-Trp, in which cleavage of the -Tyr-|-Leu- and -Tyr-|-Trp bonds also occurs).. Functionally, cleaves peptides in various proteins in a process that requires ATP hydrolysis. Has a chymotrypsin-like activity. Plays a major role in the degradation of misfolded proteins. The protein is ATP-dependent Clp protease proteolytic subunit of Geobacillus sp. (strain WCH70).